Here is a 162-residue protein sequence, read N- to C-terminus: Novel acetylcholine receptor chaperone (162 aa).

Residues 1 to 5 (MASPR) lie on the Cytoplasmic side of the membrane. A helical membrane pass occupies residues 6–26 (TVTIVALSVTLGLFFVFMGTI). Topologically, residues 27-61 (KLTPRLSKDAYSEMKRAYKSYVKALPALKKIGISS) are lumenal. A helical transmembrane segment spans residues 62–82 (VFLRKAIGSLELACGIVLTLV). The Cytoplasmic portion of the chain corresponds to 83 to 88 (PGRPKD). A helical transmembrane segment spans residues 89 to 109 (VANFILLLLVLIVLFFHQLVG). Over 110–114 (DPLKR) the chain is Lumenal. The chain crosses the membrane as a helical span at residues 115–131 (YAHALVFGILLTCRLLV). Topologically, residues 132-162 (SRQPEEEFPEKKLSRGNNGAHSREPIKMKVS) are cytoplasmic. The tract at residues 141–162 (EKKLSRGNNGAHSREPIKMKVS) is disordered. Positions 152-162 (HSREPIKMKVS) are enriched in basic and acidic residues.

It belongs to the DoxX family.

It localises to the peroxisome membrane. Its subcellular location is the cytoplasmic vesicle. It is found in the endoplasmic reticulum membrane. Molecular chaperone which mediates the proper assembly and functional expression of the nicotinic acetylcholine receptors (nAChRs) throughout the brain. Essential for the proper folding, assembly, function and surface trafficking of alpha-7 (CHRNA7), alpha-4-beta-2, alpha-3-beta-2 and alpha-3-beta-4 receptors. The polypeptide is Novel acetylcholine receptor chaperone (tmem35a) (Xenopus tropicalis (Western clawed frog)).